The sequence spans 254 residues: MAAYKLVLIRHGESTWNLENRFSGWYDADLSPAGHEEAKRGGQALRDAGYEFDICFTSVQKRAIRTLWTVLDAIDQMWLPVVRTWRLNERHYGGLTGLNKAETAAKHGEAQVKIWRRSYDVPPPPMEPDHPFYSNISKDRRYADLTEDQLPSCESLKDTIARALPFWNEEIVPQIKEGKRVLIAAHGNSLRGIVKHLEGLSEEAIMELNLPTGIPMVYELDKNLKPIKPMQFLGDEETVRKAMEAVAAQGKAKK.

Residues 10-17 (RHGESTWN) and 23-24 (SG) contribute to the substrate site. His-11 acts as the Tele-phosphohistidine intermediate in catalysis. Residues Ser-14 and Ser-23 each carry the phosphoserine modification. Residue Tyr-26 is modified to Phosphotyrosine. At Ser-31 the chain carries Phosphoserine. Substrate-binding positions include Arg-62, 89–92 (ERHY), and Lys-100. Glu-89 serves as the catalytic Proton donor/acceptor. An N6-acetyllysine modification is found at Lys-106. Position 116 to 117 (116 to 117 (RR)) interacts with substrate. Ser-118 carries the post-translational modification Phosphoserine. Residue 187–188 (GN) participates in substrate binding. Lys-251 is subject to N6-acetyllysine; alternate. An N6-succinyllysine; alternate modification is found at Lys-251. An N6-acetyllysine mark is found at Lys-253 and Lys-254.

Belongs to the phosphoglycerate mutase family. BPG-dependent PGAM subfamily. Homodimer. Post-translationally, acetylated at Lys-253, Lys-253 and Lys-254 under high glucose condition. Acetylation increases catalytic activity. Under glucose restriction SIRT1 levels dramatically increase and it deacetylates the enzyme.

The catalysed reaction is (2R)-2-phosphoglycerate = (2R)-3-phosphoglycerate. It catalyses the reaction (2R)-3-phospho-glyceroyl phosphate = (2R)-2,3-bisphosphoglycerate + H(+). Functionally, catalyzes the interconversion of 2-phosphoglycerate and 3-phosphoglyceratea crucial step in glycolysis, by using 2,3-bisphosphoglycerate. Also catalyzes the interconversion of (2R)-2,3-bisphosphoglycerate and (2R)-3-phospho-glyceroyl phosphate. This is Phosphoglycerate mutase 1 from Bos taurus (Bovine).